Here is a 379-residue protein sequence, read N- to C-terminus: Eukaryotic translation initiation factor 3 subunit H (379 aa).

One can recognise an MPN domain in the interval Val-17–Ala-170. Positions Arg-280–Gly-291 are enriched in basic and acidic residues. The segment at Arg-280–Ile-300 is disordered.

This sequence belongs to the eIF-3 subunit H family. In terms of assembly, component of the eukaryotic translation initiation factor 3 (eIF-3) complex.

It is found in the cytoplasm. In terms of biological role, component of the eukaryotic translation initiation factor 3 (eIF-3) complex, which is involved in protein synthesis of a specialized repertoire of mRNAs and, together with other initiation factors, stimulates binding of mRNA and methionyl-tRNAi to the 40S ribosome. The eIF-3 complex specifically targets and initiates translation of a subset of mRNAs involved in cell proliferation. In Brugia malayi (Filarial nematode worm), this protein is Eukaryotic translation initiation factor 3 subunit H.